Reading from the N-terminus, the 152-residue chain is Superoxide dismutase [Cu-Zn] 1 (152 aa).

Positions 45, 47, and 62 each coordinate Cu cation. An intrachain disulfide couples cysteine 56 to cysteine 145. Zn(2+) contacts are provided by histidine 62, histidine 70, histidine 79, and aspartate 82. Histidine 119 contacts Cu cation.

It belongs to the Cu-Zn superoxide dismutase family. Homodimer. It depends on Cu cation as a cofactor. Zn(2+) is required as a cofactor.

The protein resides in the cytoplasm. The catalysed reaction is 2 superoxide + 2 H(+) = H2O2 + O2. Destroys radicals which are normally produced within the cells and which are toxic to biological systems. The protein is Superoxide dismutase [Cu-Zn] 1 (SODCC.1) of Solanum lycopersicum (Tomato).